Here is an 84-residue protein sequence, read N- to C-terminus: Beta-cardiotoxin CTX21 (84 aa).

The N-terminal stretch at Met1–Thr21 is a signal peptide. Cystine bridges form between Cys24–Cys43, Cys36–Cys61, Cys65–Cys76, and Cys77–Cys82.

The protein belongs to the three-finger toxin family. Short-chain subfamily. Aminergic toxin sub-subfamily. In terms of tissue distribution, expressed by the venom gland.

The protein localises to the secreted. Acts as a beta-blocker by binding to beta-1 and beta-2 adrenergic receptors (ADRB1 and ADRB2). It dose-dependently decreases the heart rate (bradycardia), whereas conventional cardiotoxins increases it. At 100 mg/kg, intraperitoneal injection into mice provokes labored breathing, impaired locomotion, lack of response to external stimuli, and death (after 30 minutes). The polypeptide is Beta-cardiotoxin CTX21 (Ophiophagus hannah (King cobra)).